We begin with the raw amino-acid sequence, 262 residues long: Octanoyltransferase (262 aa).

The BPL/LPL catalytic domain maps to 60 to 248 (GTADELVWLV…AFEMVFGPTR (189 aa)). Substrate contacts are provided by residues 99–106 (RGGEYTYH), 179–181 (AIG), and 192–194 (GLS). C210 functions as the Acyl-thioester intermediate in the catalytic mechanism.

The protein belongs to the LipB family.

Its subcellular location is the cytoplasm. It catalyses the reaction octanoyl-[ACP] + L-lysyl-[protein] = N(6)-octanoyl-L-lysyl-[protein] + holo-[ACP] + H(+). It functions in the pathway protein modification; protein lipoylation via endogenous pathway; protein N(6)-(lipoyl)lysine from octanoyl-[acyl-carrier-protein]: step 1/2. Its function is as follows. Catalyzes the transfer of endogenously produced octanoic acid from octanoyl-acyl-carrier-protein onto the lipoyl domains of lipoate-dependent enzymes. Lipoyl-ACP can also act as a substrate although octanoyl-ACP is likely to be the physiological substrate. The sequence is that of Octanoyltransferase from Sinorhizobium medicae (strain WSM419) (Ensifer medicae).